The following is a 150-amino-acid chain: Infection structure-specific protein 24 (150 aa).

Involved in the development of infection structures. The germ tube elongates across the leaf surface of the infected plant until it recognizes a stomate. Physical stimuli provided by the stomate induce differentiation of the germ tube to form a series of infection structures involved in host colonization. The sequence is that of Infection structure-specific protein 24 (INF24) from Uromyces appendiculatus (Rust fungus).